The primary structure comprises 365 residues: Chorismate synthase (365 aa).

The NADP(+) site is built by Arg48 and Arg54. FMN-binding positions include 131–133 (RSS), 243–244 (NA), Gly288, 303–307 (KPTSS), and Arg329.

It belongs to the chorismate synthase family. In terms of assembly, homotetramer. FMNH2 is required as a cofactor.

It carries out the reaction 5-O-(1-carboxyvinyl)-3-phosphoshikimate = chorismate + phosphate. It functions in the pathway metabolic intermediate biosynthesis; chorismate biosynthesis; chorismate from D-erythrose 4-phosphate and phosphoenolpyruvate: step 7/7. In terms of biological role, catalyzes the anti-1,4-elimination of the C-3 phosphate and the C-6 proR hydrogen from 5-enolpyruvylshikimate-3-phosphate (EPSP) to yield chorismate, which is the branch point compound that serves as the starting substrate for the three terminal pathways of aromatic amino acid biosynthesis. This reaction introduces a second double bond into the aromatic ring system. The sequence is that of Chorismate synthase from Sinorhizobium fredii (strain NBRC 101917 / NGR234).